We begin with the raw amino-acid sequence, 307 residues long: Transcription factor MYB78 (307 aa).

2 consecutive HTH myb-type domains span residues Glu-23–Val-79 and Arg-80–Ala-130. 2 consecutive DNA-binding regions (H-T-H motif) follow at residues Trp-51–Leu-75 and Trp-103–Val-126.

It is found in the nucleus. The sequence is that of Transcription factor MYB78 from Arabidopsis thaliana (Mouse-ear cress).